A 271-amino-acid polypeptide reads, in one-letter code: Phosphatidylglycerol--prolipoprotein diacylglyceryl transferase (271 aa).

The next 7 membrane-spanning stretches (helical) occupy residues 21-41 (ISVR…MWLA), 60-80 (LLFA…VLFY), 95-115 (VWTG…AMLW), 124-144 (FFGV…VGRL), 176-196 (SQLY…NWFI), 203-223 (GSVS…VEYV), and 230-250 (LGLF…MIIG). Arg143 is an a 1,2-diacyl-sn-glycero-3-phospho-(1'-sn-glycerol) binding site.

It belongs to the Lgt family.

It is found in the cell inner membrane. It catalyses the reaction L-cysteinyl-[prolipoprotein] + a 1,2-diacyl-sn-glycero-3-phospho-(1'-sn-glycerol) = an S-1,2-diacyl-sn-glyceryl-L-cysteinyl-[prolipoprotein] + sn-glycerol 1-phosphate + H(+). The protein operates within protein modification; lipoprotein biosynthesis (diacylglyceryl transfer). In terms of biological role, catalyzes the transfer of the diacylglyceryl group from phosphatidylglycerol to the sulfhydryl group of the N-terminal cysteine of a prolipoprotein, the first step in the formation of mature lipoproteins. The polypeptide is Phosphatidylglycerol--prolipoprotein diacylglyceryl transferase (Vibrio vulnificus (strain YJ016)).